The primary structure comprises 209 residues: Regulator of G-protein signaling 1 (209 aa).

The interval 19-42 is disordered; sequence FSASPKDSKEHSHSLLDDKKQKKR. The span at 24 to 38 shows a compositional bias: basic and acidic residues; it reads KDSKEHSHSLLDDKK. In terms of domain architecture, RGS spans 85–200; that stretch reads SLEKLLANQT…LKSNIYLNLL (116 aa).

Interacts with GNAI1 and GNAQ. In terms of tissue distribution, detected in spleen, lymph node and intestine.

It localises to the cell membrane. The protein resides in the cytoplasm. It is found in the cytosol. Its function is as follows. Regulates G protein-coupled receptor signaling cascades, including signaling downstream of the N-formylpeptide chemoattractant receptors and leukotriene receptors. Inhibits B cell chemotaxis toward CXCL12. Inhibits signal transduction by increasing the GTPase activity of G protein alpha subunits thereby driving them into their inactive GDP-bound form. The sequence is that of Regulator of G-protein signaling 1 (Rgs1) from Mus musculus (Mouse).